The following is a 441-amino-acid chain: Probable acetylornithine aminotransferase, mitochondrial (441 aa).

Lysine 294 carries the N6-(pyridoxal phosphate)lysine modification.

The protein belongs to the class-III pyridoxal-phosphate-dependent aminotransferase family. It depends on pyridoxal 5'-phosphate as a cofactor.

Its subcellular location is the mitochondrion matrix. It carries out the reaction N(2)-acetyl-L-ornithine + 2-oxoglutarate = N-acetyl-L-glutamate 5-semialdehyde + L-glutamate. Its pathway is amino-acid biosynthesis; L-arginine biosynthesis; N(2)-acetyl-L-ornithine from L-glutamate: step 4/4. The chain is Probable acetylornithine aminotransferase, mitochondrial (arg1) from Schizosaccharomyces pombe (strain 972 / ATCC 24843) (Fission yeast).